The following is an 869-amino-acid chain: Aconitate hydratase B (869 aa).

Substrate-binding positions include R191, 244 to 246 (SSR), 417 to 419 (QDT), and S501. [4Fe-4S] cluster is bound by residues C713, C772, and C775. Residues R794 and R799 each coordinate substrate.

This sequence belongs to the aconitase/IPM isomerase family. Monomer. The cofactor is [4Fe-4S] cluster.

The catalysed reaction is citrate = D-threo-isocitrate. It catalyses the reaction (2S,3R)-3-hydroxybutane-1,2,3-tricarboxylate = 2-methyl-cis-aconitate + H2O. It participates in carbohydrate metabolism; tricarboxylic acid cycle; isocitrate from oxaloacetate: step 2/2. Its pathway is organic acid metabolism; propanoate degradation. Its function is as follows. Involved in the catabolism of short chain fatty acids (SCFA) via the tricarboxylic acid (TCA)(acetyl degradation route) and probably via the 2-methylcitrate cycle I (propionate degradation route). Catalyzes the reversible isomerization of citrate to isocitrate via cis-aconitate. Catalyzes the hydration of 2-methyl-cis-aconitate to yield (2R,3S)-2-methylisocitrate. The apo form of AcnB functions as a RNA-binding regulatory protein. This Pseudomonas aeruginosa (strain ATCC 15692 / DSM 22644 / CIP 104116 / JCM 14847 / LMG 12228 / 1C / PRS 101 / PAO1) protein is Aconitate hydratase B (acnB).